We begin with the raw amino-acid sequence, 210 residues long: Fibroblast growth factor 21 (210 aa).

The N-terminal stretch at 1–28 (MEWMRSRVGTLGLWVRLLLAVFLLGVYQ) is a signal peptide. The disordered stretch occupies residues 144–210 (PLRLPQKDSP…LQGRSPSYAS (67 aa)).

It belongs to the heparin-binding growth factors family. As to quaternary structure, interacts (via C-terminus) with KLB; this interaction is direct. Interacts with FGFR4. Most abundantly expressed in the liver, also expressed in the thymus at lower levels. Expressed in skeletal muscle (at protein level). Secreted in plasma (at protein level).

The protein resides in the secreted. Its function is as follows. Stimulates glucose uptake in differentiated adipocytes via the induction of glucose transporter SLC2A1/GLUT1 expression (but not SLC2A4/GLUT4 expression). Activity probably requires the presence of KLB. Regulates systemic glucose homeostasis and insulin sensitivity. In Mus musculus (Mouse), this protein is Fibroblast growth factor 21 (Fgf21).